The chain runs to 199 residues: Recombination protein RecR (199 aa).

The C4-type zinc finger occupies 58 to 73 (CVRCGNITNADLCGIC). The region spanning 81 to 176 (GELCVVEDVA…QVTSLAQGVP (96 aa)) is the Toprim domain.

Belongs to the RecR family.

May play a role in DNA repair. It seems to be involved in an RecBC-independent recombinational process of DNA repair. It may act with RecF and RecO. The sequence is that of Recombination protein RecR from Cereibacter sphaeroides (strain ATCC 17029 / ATH 2.4.9) (Rhodobacter sphaeroides).